A 144-amino-acid chain; its full sequence is MSISIPEELLLSDDDIPDMPDMLESEVVCALAELVGVLLIDIDIPDIELLPIDILAIDDIVDANVLLALDIASMLIDDMLDNIVLLALDIASMLIDAILDATVLDALDMASIFMLLPIFIPSILNVKYNTLFFIFYSILPTNVI.

The next 4 helical transmembrane spans lie at 27–47 (VVCALAELVGVLLIDIDIPDI), 49–69 (LLPIDILAIDDIVDANVLLAL), 83–103 (IVLLALDIASMLIDAILDATV), and 106–126 (ALDMASIFMLLPIFIPSILNV).

It localises to the membrane. This is an uncharacterized protein from Saccharomyces cerevisiae (strain ATCC 204508 / S288c) (Baker's yeast).